Reading from the N-terminus, the 337-residue chain is Glucokinase (337 aa).

An ATP-binding site is contributed by 11-16 (ADIGGT).

The protein belongs to the bacterial glucokinase family.

It is found in the cytoplasm. It catalyses the reaction D-glucose + ATP = D-glucose 6-phosphate + ADP + H(+). The protein is Glucokinase of Xylella fastidiosa (strain M12).